The chain runs to 250 residues: Cell division protein ZapD (250 aa).

The protein belongs to the ZapD family. Interacts with FtsZ.

The protein localises to the cytoplasm. Functionally, cell division factor that enhances FtsZ-ring assembly. Directly interacts with FtsZ and promotes bundling of FtsZ protofilaments, with a reduction in FtsZ GTPase activity. The protein is Cell division protein ZapD of Yersinia enterocolitica serotype O:8 / biotype 1B (strain NCTC 13174 / 8081).